The primary structure comprises 430 residues: UDP-N-acetylglucosamine 1-carboxyvinyltransferase (430 aa).

K22–N23 serves as a coordination point for phosphoenolpyruvate. R102 serves as a coordination point for UDP-N-acetyl-alpha-D-glucosamine. C126 serves as the catalytic Proton donor. C126 bears the 2-(S-cysteinyl)pyruvic acid O-phosphothioketal mark. Residues R131–L135, K172–V175, D317, and I339 contribute to the UDP-N-acetyl-alpha-D-glucosamine site.

The protein belongs to the EPSP synthase family. MurA subfamily.

It is found in the cytoplasm. The enzyme catalyses phosphoenolpyruvate + UDP-N-acetyl-alpha-D-glucosamine = UDP-N-acetyl-3-O-(1-carboxyvinyl)-alpha-D-glucosamine + phosphate. It participates in cell wall biogenesis; peptidoglycan biosynthesis. Functionally, cell wall formation. Adds enolpyruvyl to UDP-N-acetylglucosamine. In Rhizobium leguminosarum bv. trifolii (strain WSM2304), this protein is UDP-N-acetylglucosamine 1-carboxyvinyltransferase.